A 98-amino-acid polypeptide reads, in one-letter code: ATP synthase subunit alpha, chloroplastic (98 aa).

The protein belongs to the ATPase alpha/beta chains family. As to quaternary structure, F-type ATPases have 2 components, CF(1) - the catalytic core - and CF(0) - the membrane proton channel. CF(1) has five subunits: alpha(3), beta(3), gamma(1), delta(1), epsilon(1). CF(0) has four main subunits: a, b, b' and c.

Its subcellular location is the plastid. It localises to the chloroplast thylakoid membrane. The catalysed reaction is ATP + H2O + 4 H(+)(in) = ADP + phosphate + 5 H(+)(out). In terms of biological role, produces ATP from ADP in the presence of a proton gradient across the membrane. The alpha chain is a regulatory subunit. This is ATP synthase subunit alpha, chloroplastic (atpA) from Populus euphratica (Euphrates poplar).